The following is a 384-amino-acid chain: S-adenosylmethionine synthase (384 aa).

His-15 contributes to the ATP binding site. Residue Asp-17 participates in Mg(2+) binding. Residue Glu-43 coordinates K(+). 2 residues coordinate L-methionine: Glu-56 and Gln-99. Residues 99–109 form a flexible loop region; sequence QSPDINQGVDR. ATP-binding positions include 164–166, 230–231, Asp-239, 245–246, Ala-262, and Lys-266; these read DAK, RF, and RK. Asp-239 contributes to the L-methionine binding site. An L-methionine-binding site is contributed by Lys-270.

The protein belongs to the AdoMet synthase family. As to quaternary structure, homotetramer; dimer of dimers. Mg(2+) serves as cofactor. The cofactor is K(+).

It is found in the cytoplasm. It catalyses the reaction L-methionine + ATP + H2O = S-adenosyl-L-methionine + phosphate + diphosphate. It participates in amino-acid biosynthesis; S-adenosyl-L-methionine biosynthesis; S-adenosyl-L-methionine from L-methionine: step 1/1. Its function is as follows. Catalyzes the formation of S-adenosylmethionine (AdoMet) from methionine and ATP. The overall synthetic reaction is composed of two sequential steps, AdoMet formation and the subsequent tripolyphosphate hydrolysis which occurs prior to release of AdoMet from the enzyme. This chain is S-adenosylmethionine synthase, found in Yersinia pseudotuberculosis serotype IB (strain PB1/+).